The primary structure comprises 107 residues: MVNFNQFLKQAQSMQKKMQEAQEQMANARYTGKAGGGLVEVIATGKGEVEKISIDESLLKAEEKEMLEDLIKVAFNDAQQKCDEDSQNSLSGALNGMRLPPGFKMPF.

It belongs to the YbaB/EbfC family. In terms of assembly, homodimer.

Its subcellular location is the cytoplasm. It is found in the nucleoid. Binds to DNA and alters its conformation. May be involved in regulation of gene expression, nucleoid organization and DNA protection. The sequence is that of Nucleoid-associated protein RC1337 from Rickettsia conorii (strain ATCC VR-613 / Malish 7).